A 396-amino-acid chain; its full sequence is Subtelomeric hrmA-associated cluster protein AFUB_079040 (396 aa).

Disordered regions lie at residues Met-1–Leu-32 and Tyr-347–Arg-396. A compositionally biased stretch (polar residues) spans Ser-23–Leu-32. The segment covering Ser-367 to Lys-380 has biased composition (basic residues).

Part of the subtelomeric hrmA-associated cluster (HAC) containing genes that alter the hyphal surface (such as reduced total chitin or increased beta-glucan exposure) and perturb inter-hyphal interactions within the developing biofilms, resulting in a loss of vertically aligned polarized growing filaments. Consequently, this hypoxia-typic morphotype (called H-MORPH) with altered biofilm architecture leads to increased hypoxia fitness, increased host inflammation, rapid disease progression, and mortality in a murine model of invasive aspergillosis. The protein is Subtelomeric hrmA-associated cluster protein AFUB_079040 of Aspergillus fumigatus (strain CBS 144.89 / FGSC A1163 / CEA10) (Neosartorya fumigata).